The sequence spans 328 residues: D-cysteine desulfhydrase (328 aa).

Lysine 51 bears the N6-(pyridoxal phosphate)lysine mark.

This sequence belongs to the ACC deaminase/D-cysteine desulfhydrase family. Homodimer. Requires pyridoxal 5'-phosphate as cofactor.

The catalysed reaction is D-cysteine + H2O = hydrogen sulfide + pyruvate + NH4(+) + H(+). In terms of biological role, catalyzes the alpha,beta-elimination reaction of D-cysteine and of several D-cysteine derivatives. It could be a defense mechanism against D-cysteine. This chain is D-cysteine desulfhydrase, found in Escherichia coli (strain UTI89 / UPEC).